Reading from the N-terminus, the 78-residue chain is UPF0349 protein ABC2936 (78 aa).

This sequence belongs to the UPF0349 family.

The sequence is that of UPF0349 protein ABC2936 from Shouchella clausii (strain KSM-K16) (Alkalihalobacillus clausii).